The sequence spans 620 residues: 1-deoxy-D-xylulose-5-phosphate synthase (620 aa).

Thiamine diphosphate is bound by residues His-80 and 121-123 (GHS). Asp-152 is a Mg(2+) binding site. Thiamine diphosphate contacts are provided by residues 153–154 (GA), Asn-181, Tyr-288, and Glu-370. Asn-181 contacts Mg(2+).

The protein belongs to the transketolase family. DXPS subfamily. As to quaternary structure, homodimer. It depends on Mg(2+) as a cofactor. The cofactor is thiamine diphosphate.

It catalyses the reaction D-glyceraldehyde 3-phosphate + pyruvate + H(+) = 1-deoxy-D-xylulose 5-phosphate + CO2. It functions in the pathway metabolic intermediate biosynthesis; 1-deoxy-D-xylulose 5-phosphate biosynthesis; 1-deoxy-D-xylulose 5-phosphate from D-glyceraldehyde 3-phosphate and pyruvate: step 1/1. Catalyzes the acyloin condensation reaction between C atoms 2 and 3 of pyruvate and glyceraldehyde 3-phosphate to yield 1-deoxy-D-xylulose-5-phosphate (DXP). The sequence is that of 1-deoxy-D-xylulose-5-phosphate synthase from Escherichia coli (strain K12 / MC4100 / BW2952).